The following is a 77-amino-acid chain: Large ribosomal subunit protein bL28 (77 aa).

The protein belongs to the bacterial ribosomal protein bL28 family.

The chain is Large ribosomal subunit protein bL28 from Methylibium petroleiphilum (strain ATCC BAA-1232 / LMG 22953 / PM1).